The chain runs to 120 residues: Host cell factor C1 regulator 1 (120 aa).

The tract at residues 1 to 30 (MILQQPLERGPPSRDPRATTGVTRGLNASL) is disordered. Residues 20–30 (TGVTRGLNASL) show a composition bias toward polar residues. The segment at 58-61 (DHPY) is interaction with HCFC1. A Nuclear export signal motif is present at residues 92–101 (IPEALRLLRL).

In terms of assembly, interacts with HCFC1.

The protein resides in the cytoplasm. Its subcellular location is the nucleus. Functionally, regulates HCFC1 activity by modulating its subcellular localization. Overexpression of HCFC1R1 leads to accumulation of HCFC1 in the cytoplasm. HCFC1R1-mediated export may provide the pool of cytoplasmic HCFC1 required for import of virion-derived VP16 into the nucleus. In Mus musculus (Mouse), this protein is Host cell factor C1 regulator 1 (Hcfc1r1).